A 161-amino-acid chain; its full sequence is Arachidonate 5-lipoxygenase-activating protein (161 aa).

Topologically, residues methionine 1–asparagine 8 are lumenal. A helical transmembrane segment spans residues isoleucine 9–valine 30. Topologically, residues glutamate 31–arginine 52 are cytoplasmic. Residues valine 53 to leucine 77 traverse the membrane as a helical segment. Topologically, residues cysteine 78 to glutamine 80 are lumenal. The helical transmembrane segment at valine 81–leucine 102 threads the bilayer. The Cytoplasmic segment spans residues glycine 103–glutamine 107. Residues serine 108–glycine 115 lie within the membrane without spanning it. Residues lysine 116–alanine 128 form a helical membrane-spanning segment. Topologically, residues glycine 129–proline 161 are lumenal.

Belongs to the MAPEG family. Homotrimer. Interacts with LTC4S and ALOX5.

The protein localises to the nucleus membrane. It is found in the endoplasmic reticulum membrane. Functionally, required for leukotriene biosynthesis by ALOX5 (5-lipoxygenase). Anchors ALOX5 to the membrane. Binds arachidonic acid, and could play an essential role in the transfer of arachidonic acid to ALOX5. Binds to MK-886, a compound that blocks the biosynthesis of leukotrienes. The protein is Arachidonate 5-lipoxygenase-activating protein (ALOX5AP) of Bos taurus (Bovine).